A 305-amino-acid polypeptide reads, in one-letter code: Putative lipid kinase SAS0691 (305 aa).

Residues 3-139 (NKYTHGVLFY…YDVIKINNQY (137 aa)) enclose the DAGKc domain. ATP is bound by residues Ser-44, 74–80 (GDGTVNE), and Thr-101. 3 residues coordinate Mg(2+): Ser-220, Asp-223, and Glu-225. Glu-281 functions as the Proton acceptor in the catalytic mechanism.

The protein belongs to the diacylglycerol/lipid kinase family. Mg(2+) is required as a cofactor.

Functionally, may catalyze the ATP-dependent phosphorylation of lipids other than diacylglycerol (DAG). The protein is Putative lipid kinase SAS0691 of Staphylococcus aureus (strain MSSA476).